Here is a 115-residue protein sequence, read N- to C-terminus: Small nuclear ribonucleoprotein Sm D2 (115 aa).

The Sm domain maps to L30 to A115.

This sequence belongs to the snRNP core protein family. Belongs to the 40S cdc5-associated complex (or cwf complex), a spliceosome sub-complex reminiscent of a late-stage spliceosome composed of the U2, U5 and U6 snRNAs and at least brr2, cdc5, cwf2/prp3, cwf3/syf1, cwf4/syf3, cwf5/ecm2, spp42/cwf6, cwf7/spf27, cwf8, cwf9, cwf10, cwf11, cwf12, prp45/cwf13, cwf14, cwf15, cwf16, cwf17, cwf18, cwf19, cwf20, cwf21, cwf22, cwf23, cwf24, cwf25, cwf26, cyp7/cwf27, cwf28, cwf29/ist3, lea1, msl1, prp5/cwf1, prp10, prp12/sap130, prp17, prp22, sap61, sap62, sap114, sap145, slu7, smb1, smd1, smd3, smf1, smg1 and syf2.

It is found in the nucleus. The protein resides in the cytoplasm. Its subcellular location is the cytosol. In terms of biological role, plays a role in pre-mRNA splicing as a core component of the spliceosomal U1, U2, U4 and U5 small nuclear ribonucleoproteins (snRNPs), the building blocks of the spliceosome. This chain is Small nuclear ribonucleoprotein Sm D2 (smd2), found in Schizosaccharomyces pombe (strain 972 / ATCC 24843) (Fission yeast).